The primary structure comprises 602 residues: uncharacterized protein (602 aa).

In terms of domain architecture, Helicase ATP-binding spans 51–210 (QYLGTQPRDF…PFVSYQPDAD (160 aa)). The segment covering 430-439 (PHRESAHDPL) has biased composition (basic and acidic residues). Disordered regions lie at residues 430–452 (PHRE…TERG) and 518–538 (RAQL…ASVH). The segment covering 523-534 (KGATQPATSGAS) has biased composition (polar residues).

This sequence to M.leprae ML1624.

This is an uncharacterized protein from Mycobacterium tuberculosis (strain ATCC 25618 / H37Rv).